Reading from the N-terminus, the 316-residue chain is 4-hydroxy-3-methylbut-2-enyl diphosphate reductase (316 aa).

Residue C17 coordinates [4Fe-4S] cluster. (2E)-4-hydroxy-3-methylbut-2-enyl diphosphate is bound by residues H46 and H79. Residues H46 and H79 each contribute to the dimethylallyl diphosphate site. Isopentenyl diphosphate-binding residues include H46 and H79. C101 contacts [4Fe-4S] cluster. H129 is a (2E)-4-hydroxy-3-methylbut-2-enyl diphosphate binding site. Residue H129 coordinates dimethylallyl diphosphate. H129 contributes to the isopentenyl diphosphate binding site. The active-site Proton donor is the E131. T170 contributes to the (2E)-4-hydroxy-3-methylbut-2-enyl diphosphate binding site. [4Fe-4S] cluster is bound at residue C200. (2E)-4-hydroxy-3-methylbut-2-enyl diphosphate contacts are provided by S228, S229, N230, and S273. Dimethylallyl diphosphate-binding residues include S228, S229, N230, and S273. Positions 228, 229, 230, and 273 each coordinate isopentenyl diphosphate.

The protein belongs to the IspH family. [4Fe-4S] cluster serves as cofactor.

The enzyme catalyses isopentenyl diphosphate + 2 oxidized [2Fe-2S]-[ferredoxin] + H2O = (2E)-4-hydroxy-3-methylbut-2-enyl diphosphate + 2 reduced [2Fe-2S]-[ferredoxin] + 2 H(+). It carries out the reaction dimethylallyl diphosphate + 2 oxidized [2Fe-2S]-[ferredoxin] + H2O = (2E)-4-hydroxy-3-methylbut-2-enyl diphosphate + 2 reduced [2Fe-2S]-[ferredoxin] + 2 H(+). Its pathway is isoprenoid biosynthesis; dimethylallyl diphosphate biosynthesis; dimethylallyl diphosphate from (2E)-4-hydroxy-3-methylbutenyl diphosphate: step 1/1. It participates in isoprenoid biosynthesis; isopentenyl diphosphate biosynthesis via DXP pathway; isopentenyl diphosphate from 1-deoxy-D-xylulose 5-phosphate: step 6/6. Catalyzes the conversion of 1-hydroxy-2-methyl-2-(E)-butenyl 4-diphosphate (HMBPP) into a mixture of isopentenyl diphosphate (IPP) and dimethylallyl diphosphate (DMAPP). Acts in the terminal step of the DOXP/MEP pathway for isoprenoid precursor biosynthesis. This chain is 4-hydroxy-3-methylbut-2-enyl diphosphate reductase, found in Roseobacter denitrificans (strain ATCC 33942 / OCh 114) (Erythrobacter sp. (strain OCh 114)).